The sequence spans 494 residues: Subtilisin-like serine protease EN45_078720 (494 aa).

An N-terminal signal peptide occupies residues 1–16; that stretch reads MKGFLSLTLLPLLVAA. Residues 17-136 constitute a propeptide, removed in mature form; the sequence is SPVAVNSIHN…IEKDSEVRTM (120 aa). Residues 43-136 enclose the Inhibitor I9 domain; sequence SYIVVFKKHV…IEKDSEVRTM (94 aa). Residues 146–448 enclose the Peptidase S8 domain; it reads PWGLARISHR…GGSANYTKIL (303 aa). IgE-binding stretches follow at residues 180–198 and 209–231; these read VIDT…RANW and EDGN…GVAK. Active-site charge relay system residues include aspartate 182 and histidine 214. 2 N-linked (GlcNAc...) asparagine glycosylation sites follow: asparagine 244 and asparagine 280. Catalysis depends on serine 376, which acts as the Charge relay system. A glycan (N-linked (GlcNAc...) asparagine) is linked at asparagine 443. Residues 454–494 constitute a propeptide, removed in mature form; it reads KAHNAETTVEDRIGGIIDSAEKAFHKELGAIYSEIKDAVSA.

Belongs to the peptidase S8 family.

Functionally, serine protease. The chain is Subtilisin-like serine protease EN45_078720 from Penicillium chrysogenum (Penicillium notatum).